A 199-amino-acid polypeptide reads, in one-letter code: Putative AgrB-like protein (199 aa).

5 consecutive transmembrane segments (helical) span residues 43–63 (IIIF…FSFI), 81–101 (YGCL…TRLF), 108–128 (FYIV…PCPN), 139–159 (LKIL…LSPL), and 165–185 (ILIS…KGVI).

This sequence belongs to the AgrB family.

The protein localises to the cell membrane. Functionally, may be involved in the proteolytic processing of a quorum sensing system signal molecule precursor. This is Putative AgrB-like protein (cfg02) from Clostridium beijerinckii (Clostridium MP).